Reading from the N-terminus, the 2476-residue chain is Non-reducing polyketide synthase ausA (2476 aa).

Positions Val-14–Glu-253 are N-terminal acylcarrier protein transacylase domain (SAT). Residues Ala-379–Glu-795 form the Ketosynthase family 3 (KS3) domain. Active-site for beta-ketoacyl synthase activity residues include Cys-544, His-679, and His-718. The interval Ile-906–Ala-1210 is malonyl-CoA:ACP transacylase (MAT) domain. The active-site For acyl/malonyl transferase activity is the Ser-993. Residues Gln-1277 to Ser-1405 form an N-terminal hotdog fold region. Residues Gln-1277 to Lys-1584 enclose the PKS/mFAS DH domain. Positions Ser-1280–Leu-1583 are product template (PT) domain. The active-site Proton acceptor; for dehydratase activity is His-1310. Residues Ser-1433–Lys-1584 are C-terminal hotdog fold. Asp-1491 (proton donor; for dehydratase activity) is an active-site residue. A Carrier domain is found at Asp-1626–His-1700. Ser-1660 carries the O-(pantetheine 4'-phosphoryl)serine modification. Positions Gln-1862–Asn-2095 are methyltransferase (CMeT) domain. Positions Asn-2128 to Leu-2476 are thioesterase (TE) domain. Active-site for thioesterase activity residues include Ser-2251, Asp-2413, and His-2445.

It catalyses the reaction 3 malonyl-CoA + acetyl-CoA + 2 S-adenosyl-L-methionine = 3,5-dimethylorsellinate + 2 S-adenosyl-L-homocysteine + 3 CO2 + 4 CoA. Its pathway is secondary metabolite biosynthesis; terpenoid biosynthesis. Non-reducing polyketide synthase; part of the gene cluster A that mediates the biosynthesis of austinol and dehydroaustinol, two fungal meroterpenoids. The first step of the pathway is the synthesis of 3,5-dimethylorsellinic acid by the polyketide synthase ausA. 3,5-dimethylorsellinic acid is then prenylated by the polyprenyl transferase ausN. Further epoxidation by the FAD-dependent monooxygenase ausM and cyclization by the probable terpene cyclase ausL lead to the formation of protoaustinoid A. Protoaustinoid A is then oxidized to spiro-lactone preaustinoid A3 by the combined action of the FAD-binding monooxygenases ausB and ausC, and the dioxygenase ausE. Acid-catalyzed keto-rearrangement and ring contraction of the tetraketide portion of preaustinoid A3 by ausJ lead to the formation of preaustinoid A4. The aldo-keto reductase ausK, with the help of ausH, is involved in the next step by transforming preaustinoid A4 into isoaustinone which is in turn hydroxylated by the P450 monooxygenase ausI to form austinolide. Finally, the cytochrome P450 monooxygenase ausG modifies austinolide to austinol. Austinol can be further modified to dehydroaustinol which forms a diffusible complex with diorcinol that initiates conidiation. Due to genetic rearrangements of the clusters and the subsequent loss of some enzymes, the end products of the Emericella nidulans austinoid biosynthesis clusters are austinol and dehydroaustinol, even if additional enzymes, such as the O-acetyltransferase ausQ and the cytochrome P450 monooxygenase ausR are still functional. This chain is Non-reducing polyketide synthase ausA, found in Emericella nidulans (strain FGSC A4 / ATCC 38163 / CBS 112.46 / NRRL 194 / M139) (Aspergillus nidulans).